The sequence spans 206 residues: Large ribosomal subunit protein uL4 (206 aa).

It belongs to the universal ribosomal protein uL4 family. In terms of assembly, part of the 50S ribosomal subunit.

Functionally, one of the primary rRNA binding proteins, this protein initially binds near the 5'-end of the 23S rRNA. It is important during the early stages of 50S assembly. It makes multiple contacts with different domains of the 23S rRNA in the assembled 50S subunit and ribosome. In terms of biological role, forms part of the polypeptide exit tunnel. This Bradyrhizobium sp. (strain BTAi1 / ATCC BAA-1182) protein is Large ribosomal subunit protein uL4.